Consider the following 217-residue polypeptide: Thymidylate kinase (217 aa).

16–23 is an ATP binding site; it reads GIDGAGKT.

The protein belongs to the thymidylate kinase family.

The enzyme catalyses dTMP + ATP = dTDP + ADP. Functionally, phosphorylation of dTMP to form dTDP in both de novo and salvage pathways of dTTP synthesis. The polypeptide is Thymidylate kinase (Xylella fastidiosa (strain M12)).